Here is a 548-residue protein sequence, read N- to C-terminus: Chaperonin GroEL (548 aa).

Residues 30–33, Lys51, 87–91, Gly415, 479–481, and Asp495 each bind ATP; these read TLGP, DGTTT, and NAA.

The protein belongs to the chaperonin (HSP60) family. Forms a cylinder of 14 subunits composed of two heptameric rings stacked back-to-back. Interacts with the co-chaperonin GroES.

The protein localises to the cytoplasm. The enzyme catalyses ATP + H2O + a folded polypeptide = ADP + phosphate + an unfolded polypeptide.. In terms of biological role, together with its co-chaperonin GroES, plays an essential role in assisting protein folding. The GroEL-GroES system forms a nano-cage that allows encapsulation of the non-native substrate proteins and provides a physical environment optimized to promote and accelerate protein folding. This is Chaperonin GroEL from Methylibium petroleiphilum (strain ATCC BAA-1232 / LMG 22953 / PM1).